Here is an 84-residue protein sequence, read N- to C-terminus: Putative pelota-like protein YCL001W-B (84 aa).

Belongs to the eukaryotic release factor 1 family. Pelota subfamily. Highly divergent.

This is Putative pelota-like protein YCL001W-B from Saccharomyces cerevisiae (strain ATCC 204508 / S288c) (Baker's yeast).